We begin with the raw amino-acid sequence, 121 residues long: Large ribosomal subunit protein uL18 (121 aa).

It belongs to the universal ribosomal protein uL18 family. Part of the 50S ribosomal subunit; part of the 5S rRNA/L5/L18/L25 subcomplex. Contacts the 5S and 23S rRNAs.

Functionally, this is one of the proteins that bind and probably mediate the attachment of the 5S RNA into the large ribosomal subunit, where it forms part of the central protuberance. This chain is Large ribosomal subunit protein uL18, found in Buchnera aphidicola subsp. Baizongia pistaciae (strain Bp).